A 555-amino-acid chain; its full sequence is 5'-nucleotidase-related protein (555 aa).

The first 25 residues, 1–25 (MKSLIGTLGLYCLFILTNNVVSSYG), serve as a signal peptide directing secretion. A divalent metal cation-binding residues include Asp-38, His-40, and Asp-91. N-linked (GlcNAc...) asparagine glycosylation is present at Asn-105. A divalent metal cation is bound at residue Asn-123. Asn-198 is a glycosylation site (N-linked (GlcNAc...) asparagine). The a divalent metal cation site is built by His-225 and His-249. Residue Asn-295 is glycosylated (N-linked (GlcNAc...) asparagine). The AMP site is built by Arg-358, Arg-402, and Phe-421. Residue Asn-465 is glycosylated (N-linked (GlcNAc...) asparagine). AMP contacts are provided by Phe-505 and Asp-511.

The protein belongs to the 5'-nucleotidase family. Requires Mg(2+) as cofactor. Mn(2+) is required as a cofactor. As to expression, salivary gland (at protein level). Saliva (at protein level).

It is found in the secreted. It carries out the reaction a ribonucleoside 5'-triphosphate + 2 H2O = a ribonucleoside 5'-phosphate + 2 phosphate + 2 H(+). Its activity is regulated as follows. DEPC (2 mM), sodium fluoride (10 mM) and 4,4'-Diisothiocyano-2,2'-stilbenedisulfonic acid (DIDS, 100 uM) nearly completely abrogate activity. Concanavalin A enhances activity. Functionally, facilitates hematophagy by inhibiting ADP-dependent platelet aggregation and promoting disaggregation of ADP-stimulated platelets in the host. Cleaves adenosine triphosphate (ATP) and adenosine diphosphate (ADP) to adenosine monophosphate (AMP) and inorganic phosphate. Interacts with fibrinogen receptor integrin alpha-IIb/beta-3 (ITGA2B/ITGB3). The sequence is that of 5'-nucleotidase-related protein from Glossina morsitans morsitans (Savannah tsetse fly).